We begin with the raw amino-acid sequence, 434 residues long: MESKPFTLPSQSATVLIGTQFGDEGKGKLVDYLSDQYDIVVRYQGGANAGHTICFDGKSVVLHLIPSGIFNEKCVCVIGNGVVIDPVALLEEIAKVEELGYTVKGRLFISHNAHLIMPYHKRLDALHESAQGGQKIGTTGRGIGPSYEDKFARKGIRVVDLLSPGLLQEKLRENLAEKNKLFRNIYEGDEIDVESMVREYEEFDKLMDPYITNTQLYLNRQLRQGKTVLLEGAQGCLLDVDHGTYPYVTSSSPTSGGACTGSGIAPNHIGKVIGVCKAYMTRVGNGAFPTELNDATGEMLGRVGHEFGATTGRKRRCGWIDLVAMRYSVAVNGITELALTKLDVLDGFEEIKVCNSYMLNGKEIRDFPTDHQTLSAVQPVYTTLKGWMASNAAARTFEGMCPEAREYVAFLERELEVPVTFISVGPGREETVFR.

GTP contacts are provided by residues 22-28 and 50-52; these read GDEGKGK and GHT. Catalysis depends on Asp-23, which acts as the Proton acceptor. The Mg(2+) site is built by Asp-23 and Gly-50. IMP is bound by residues 23-26, 48-51, Thr-139, Arg-153, Gln-234, Thr-249, and Arg-313; these read DEGK and NAGH. His-51 (proton donor) is an active-site residue. 309-315 lines the substrate pocket; sequence ATTGRKR. Residues Arg-315, 341 to 343, and 423 to 425 contribute to the GTP site; these read KLD and SVG.

It belongs to the adenylosuccinate synthetase family. Homodimer. The cofactor is Mg(2+).

Its subcellular location is the cytoplasm. The catalysed reaction is IMP + L-aspartate + GTP = N(6)-(1,2-dicarboxyethyl)-AMP + GDP + phosphate + 2 H(+). Its pathway is purine metabolism; AMP biosynthesis via de novo pathway; AMP from IMP: step 1/2. In terms of biological role, plays an important role in the de novo pathway of purine nucleotide biosynthesis. Catalyzes the first committed step in the biosynthesis of AMP from IMP. This chain is Adenylosuccinate synthetase, found in Chlorobium luteolum (strain DSM 273 / BCRC 81028 / 2530) (Pelodictyon luteolum).